We begin with the raw amino-acid sequence, 212 residues long: Imidazole glycerol phosphate synthase subunit HisH (212 aa).

Residues 4-210 (NIGIIDYGMG…LKWLHEKNSD (207 aa)) enclose the Glutamine amidotransferase type-1 domain. Cys82 functions as the Nucleophile in the catalytic mechanism. Active-site residues include His185 and Glu187.

Heterodimer of HisH and HisF.

It is found in the cytoplasm. The catalysed reaction is 5-[(5-phospho-1-deoxy-D-ribulos-1-ylimino)methylamino]-1-(5-phospho-beta-D-ribosyl)imidazole-4-carboxamide + L-glutamine = D-erythro-1-(imidazol-4-yl)glycerol 3-phosphate + 5-amino-1-(5-phospho-beta-D-ribosyl)imidazole-4-carboxamide + L-glutamate + H(+). The enzyme catalyses L-glutamine + H2O = L-glutamate + NH4(+). Its pathway is amino-acid biosynthesis; L-histidine biosynthesis; L-histidine from 5-phospho-alpha-D-ribose 1-diphosphate: step 5/9. IGPS catalyzes the conversion of PRFAR and glutamine to IGP, AICAR and glutamate. The HisH subunit catalyzes the hydrolysis of glutamine to glutamate and ammonia as part of the synthesis of IGP and AICAR. The resulting ammonia molecule is channeled to the active site of HisF. In Prochlorococcus marinus (strain MIT 9211), this protein is Imidazole glycerol phosphate synthase subunit HisH.